Reading from the N-terminus, the 638-residue chain is 1-deoxy-D-xylulose-5-phosphate synthase (638 aa).

Residues His-79 and 120 to 122 (GHS) each bind thiamine diphosphate. Asp-151 is a Mg(2+) binding site. Thiamine diphosphate is bound by residues 152–153 (GA), Asn-182, Tyr-291, and Glu-373. Residue Asn-182 coordinates Mg(2+).

The protein belongs to the transketolase family. DXPS subfamily. In terms of assembly, homodimer. It depends on Mg(2+) as a cofactor. Thiamine diphosphate serves as cofactor.

It carries out the reaction D-glyceraldehyde 3-phosphate + pyruvate + H(+) = 1-deoxy-D-xylulose 5-phosphate + CO2. The protein operates within metabolic intermediate biosynthesis; 1-deoxy-D-xylulose 5-phosphate biosynthesis; 1-deoxy-D-xylulose 5-phosphate from D-glyceraldehyde 3-phosphate and pyruvate: step 1/1. Catalyzes the acyloin condensation reaction between C atoms 2 and 3 of pyruvate and glyceraldehyde 3-phosphate to yield 1-deoxy-D-xylulose-5-phosphate (DXP). This chain is 1-deoxy-D-xylulose-5-phosphate synthase, found in Xanthomonas campestris pv. campestris (strain 8004).